The chain runs to 553 residues: MLNNRACKVGAFLMALFFVITYLLPLNGRLLWQPDETRYAEISREMLQRGDWIVPYLLDIRYFEKPVAGYWINNISQWIFGDNNFAVRFGSVFCIFISAILLYRLAMMMWHNRHIAFATSLIYISMFLVFAIGTYSVLDPMFSLWVTAAMMCSFWGLKTDCTRRRIMAYLVLGLCCGMGFMTKGFLALAVPVIVMLPIVIYQKRVLQIVCFGPLAIISAIAISLPWVIAIALREPDYWHYFFWVEHIKRFSSDDAQHIAPFWYYIPILILGVIPWLGLLPGAVMKSWKERKSNPEMFFLLCWFVVPLLFFSIAKGKLPTYILPCMAPLAMMMAKFGVDCVKNGKMELLKINGMVNVFLGLLAVIVLFAMEVVTKHALYQPSEWLKWVLAIVAFGIWGIIGYLCFALNGKYWLLAAFCSIVVSLVIGHALPENTVNSKLPQNFIKLHHQELAGSRYILSESVGLATSVAWEMKRSDIYMFERWGELEYGLNYPDSRYRYISYKDFPQWLAKARKEGRVSVLFHLYKDEKLPDLPKADQISRNYRFAILVYEKQP.

11 consecutive transmembrane segments (helical) span residues alanine 6–leucine 26, phenylalanine 89–methionine 109, isoleucine 115–tyrosine 135, phenylalanine 180–isoleucine 200, isoleucine 208–isoleucine 228, isoleucine 258–leucine 278, asparagine 293–alanine 313, leucine 317–valine 337, glycine 352–valine 372, tryptophan 386–leucine 406, and tyrosine 410–proline 430.

The protein belongs to the glycosyltransferase 83 family.

It is found in the cell inner membrane. It carries out the reaction 4-amino-4-deoxy-alpha-L-arabinopyranosyl di-trans,octa-cis-undecaprenyl phosphate + lipid IVA = lipid IIA + di-trans,octa-cis-undecaprenyl phosphate.. The protein operates within lipopolysaccharide metabolism; 4-amino-4-deoxy-beta-L-arabinose-lipid A biosynthesis. In terms of biological role, catalyzes the transfer of the L-Ara4N moiety of the glycolipid undecaprenyl phosphate-alpha-L-Ara4N to lipid A. The modified arabinose is attached to lipid A and is required for resistance to polymyxin and cationic antimicrobial peptides. The polypeptide is Undecaprenyl phosphate-alpha-4-amino-4-deoxy-L-arabinose arabinosyl transferase (arnT) (Photorhabdus laumondii subsp. laumondii (strain DSM 15139 / CIP 105565 / TT01) (Photorhabdus luminescens subsp. laumondii)).